We begin with the raw amino-acid sequence, 348 residues long: Dihydroorotase (348 aa).

The Zn(2+) site is built by His14 and His16. Substrate is bound by residues 16-18 (HLR) and Asn42. The Zn(2+) site is built by Lys100, His137, and His175. At Lys100 the chain carries N6-carboxylysine. Residue His137 coordinates substrate. Substrate is bound at residue Leu220. Asp248 provides a ligand contact to Zn(2+). Residue Asp248 is part of the active site. 2 residues coordinate substrate: His252 and Ala264.

This sequence belongs to the metallo-dependent hydrolases superfamily. DHOase family. Class II DHOase subfamily. Homodimer. Zn(2+) is required as a cofactor.

It catalyses the reaction (S)-dihydroorotate + H2O = N-carbamoyl-L-aspartate + H(+). Its pathway is pyrimidine metabolism; UMP biosynthesis via de novo pathway; (S)-dihydroorotate from bicarbonate: step 3/3. Catalyzes the reversible cyclization of carbamoyl aspartate to dihydroorotate. This is Dihydroorotase from Ectopseudomonas mendocina (strain ymp) (Pseudomonas mendocina).